Reading from the N-terminus, the 460-residue chain is Mercuric reductase (460 aa).

The HMA domain occupies 1-65 (MTHLKITGMT…AVAGLGYKAM (65 aa)). Residues Cys11 and Cys14 each contribute to the a metal cation site. FAD-binding residues include Ala110, Gly130, and Thr135. The cysteines at positions 136 and 141 are disulfide-linked. Lys145 and Ala211 together coordinate FAD. 2 residues coordinate Hg(2+): Cys457 and Cys458.

It belongs to the class-I pyridine nucleotide-disulfide oxidoreductase family. As to quaternary structure, homodimer. It depends on FAD as a cofactor.

The enzyme catalyses Hg + NADP(+) + H(+) = Hg(2+) + NADPH. Its function is as follows. Resistance to Hg(2+) in bacteria appears to be governed by a specialized system which includes mercuric reductase. MerA protein is responsible for volatilizing mercury as Hg(0). The protein is Mercuric reductase (merA) of Serratia marcescens.